We begin with the raw amino-acid sequence, 202 residues long: NADH-quinone oxidoreductase subunit B (202 aa).

Polar residues predominate over residues 1–13 (MSSPTTKFSNAAS). The segment at 1–32 (MSSPTTKFSNAASSAGGPRVTPAAASILDPRT) is disordered. 4 residues coordinate [4Fe-4S] cluster: cysteine 81, cysteine 82, cysteine 146, and cysteine 176.

This sequence belongs to the complex I 20 kDa subunit family. In terms of assembly, NDH-1 is composed of 14 different subunits. Subunits NuoB, C, D, E, F, and G constitute the peripheral sector of the complex. Requires [4Fe-4S] cluster as cofactor.

It localises to the cell inner membrane. It carries out the reaction a quinone + NADH + 5 H(+)(in) = a quinol + NAD(+) + 4 H(+)(out). In terms of biological role, NDH-1 shuttles electrons from NADH, via FMN and iron-sulfur (Fe-S) centers, to quinones in the respiratory chain. The immediate electron acceptor for the enzyme in this species is believed to be ubiquinone. Couples the redox reaction to proton translocation (for every two electrons transferred, four hydrogen ions are translocated across the cytoplasmic membrane), and thus conserves the redox energy in a proton gradient. The sequence is that of NADH-quinone oxidoreductase subunit B from Nitrobacter hamburgensis (strain DSM 10229 / NCIMB 13809 / X14).